A 139-amino-acid chain; its full sequence is Putative pre-16S rRNA nuclease (139 aa).

The protein belongs to the YqgF nuclease family.

It localises to the cytoplasm. Could be a nuclease involved in processing of the 5'-end of pre-16S rRNA. The polypeptide is Putative pre-16S rRNA nuclease (Haemophilus influenzae (strain 86-028NP)).